Consider the following 261-residue polypeptide: Succinate dehydrogenase iron-sulfur subunit (261 aa).

The 2Fe-2S ferredoxin-type domain maps to 28 to 119 (RKVKVYRYDP…DIKIYPLPHM (92 aa)). Residues Cys-80, Cys-85, and Cys-100 each coordinate [2Fe-2S] cluster. One can recognise a 4Fe-4S ferredoxin-type domain in the interval 161–191 (DREKLDGLYECILCACCSTSCPSYWWNGDKY). [4Fe-4S] cluster-binding residues include Cys-171, Cys-174, and Cys-177. Residue Cys-181 coordinates [3Fe-4S] cluster. Trp-186 is a binding site for a ubiquinone. Residues Cys-228 and Cys-234 each coordinate [3Fe-4S] cluster. A [4Fe-4S] cluster-binding site is contributed by Cys-238.

Belongs to the succinate dehydrogenase/fumarate reductase iron-sulfur protein family. In terms of assembly, part of an enzyme complex containing four subunits: a flavoprotein, an iron-sulfur, cytochrome b-556, and a hydrophobic anchor protein. Requires [2Fe-2S] cluster as cofactor. The cofactor is [3Fe-4S] cluster. [4Fe-4S] cluster serves as cofactor.

It carries out the reaction a quinone + succinate = fumarate + a quinol. It functions in the pathway carbohydrate metabolism; tricarboxylic acid cycle; fumarate from succinate (bacterial route): step 1/1. This chain is Succinate dehydrogenase iron-sulfur subunit (sdhB), found in Rickettsia prowazekii (strain Madrid E).